Here is a 389-residue protein sequence, read N- to C-terminus: Lipid-A-disaccharide synthase (389 aa).

The protein belongs to the LpxB family.

It catalyses the reaction a lipid X + a UDP-2-N,3-O-bis[(3R)-3-hydroxyacyl]-alpha-D-glucosamine = a lipid A disaccharide + UDP + H(+). Its pathway is bacterial outer membrane biogenesis; LPS lipid A biosynthesis. Functionally, condensation of UDP-2,3-diacylglucosamine and 2,3-diacylglucosamine-1-phosphate to form lipid A disaccharide, a precursor of lipid A, a phosphorylated glycolipid that anchors the lipopolysaccharide to the outer membrane of the cell. The protein is Lipid-A-disaccharide synthase of Burkholderia ambifaria (strain MC40-6).